We begin with the raw amino-acid sequence, 501 residues long: Ribose import ATP-binding protein RbsA (501 aa).

ABC transporter domains are found at residues 6 to 242 (LQLS…VGRK) and 253 to 495 (KHGE…VGKK). 38–45 (GENGAGKS) lines the ATP pocket.

It belongs to the ABC transporter superfamily. Ribose importer (TC 3.A.1.2.1) family. The complex is composed of an ATP-binding protein (RbsA), two transmembrane proteins (RbsC) and a solute-binding protein (RbsB).

The protein localises to the cell inner membrane. It catalyses the reaction D-ribose(out) + ATP + H2O = D-ribose(in) + ADP + phosphate + H(+). Its function is as follows. Part of the ABC transporter complex RbsABC involved in ribose import. Responsible for energy coupling to the transport system. The chain is Ribose import ATP-binding protein RbsA from Vibrio parahaemolyticus serotype O3:K6 (strain RIMD 2210633).